The primary structure comprises 53 residues: Conotoxin-like peptide 1 (53 aa).

An N-terminal signal peptide occupies residues 1 to 18 (MGVKSALFIMAVFAAANV). Disulfide bonds link C25–C39, C32–C43, and C38–C50.

The protein localises to the secreted. The polypeptide is Conotoxin-like peptide 1 (CTL-1) (Orgyia pseudotsugata multicapsid polyhedrosis virus (OpMNPV)).